The following is a 630-amino-acid chain: MQGGNSGVRKREEEGDGAGAVAAPPAIDFPAEGPDPEYDESDVPAEIQVLKEPLQQPTFPFAVANQLLLVSLLEHLSHVHEPNPLRSRQVFKLLCQTFIKMGLLSSFTCSDEFSSLRLHHNRAITHLMRSAKERVRQDPCEDISRIQKIRSREVALEAQTSRYLNEFEELAILGKGGYGRVYKVRNKLDGQYYAIKKILIKGATKTVCMKVLREVKVLAGLQHPNIVGYHTAWIEHVHVIQPRADRAAIELPSLEVLSDQEEDREQCGVKNDESSSSSIIFAEPTPEKEKRFGESDTENQNNKSVKYTTNLVIRESGELESTLELQENGLAGLSASSIVEQQLPLRRNSHLEESFTSTEESSEENVNFLGQTEAQYHLMLHIQMQLCELSLWDWIVERNKRGREYVDESACPYVMANVATKIFQELVEGVFYIHNMGIVHRDLKPRNIFLHGPDQQVKIGDFGLACTDILQKNTDWTNRNGKRTPTHTSRVGTCLYASPEQLEGSEYDAKSDMYSLGVVLLELFQPFGTEMERAEVLTGLRTGQLPESLRKRCPVQAKYIQHLTRRNSSQRPSAIQLLQSELFQNSGNVNLTLQMKIIEQEKEIAELKKQLNLLSQDKGVRDDGKDGGVG.

The segment at 1–40 (MQGGNSGVRKREEEGDGAGAVAAPPAIDFPAEGPDPEYDE) is disordered. The SIFI-degron signature appears at 85–104 (LRSRQVFKLLCQTFIKMGLL). The 417-residue stretch at 167–583 (FEELAILGKG…AIQLLQSELF (417 aa)) folds into the Protein kinase domain. ATP contacts are provided by residues 173-181 (LGKGGYGRV) and K196. Residues 259 to 301 (DQEEDREQCGVKNDESSSSSIIFAEPTPEKEKRFGESDTENQN) form a disordered region. Phosphothreonine is present on T285. The segment covering 285–294 (TPEKEKRFGE) has biased composition (basic and acidic residues). An HRM 1 repeat occupies 410-415 (ACPYVM). D442 functions as the Proton acceptor in the catalytic mechanism. Phosphothreonine; by autocatalysis is present on residues T486 and T488. T493 carries the post-translational modification Phosphothreonine. An HRM 2 repeat occupies 552-557 (RCPVQA).

This sequence belongs to the protein kinase superfamily. Ser/Thr protein kinase family. GCN2 subfamily. In terms of assembly, synthesized in an inactive form that binds to the N-terminal domain of CDC37. Has to be associated with a multiprotein complex containing Hsp90, CDC37 and PPP5C for maturation and activation by autophosphorylation. The phosphatase PPP5C modulates this activation. Homodimer; homodimerizes in presence of heme, forming a disulfide-linked inactive homodimer. Interacts with DELE1; binds both to full-length DELE1 and processed form of DELE1 (S-DELE1) in response to stress, leading to activate its protein kinase activity and trigger the integrated stress response (ISR). Activated by autophosphorylation; phosphorylated predominantly on serine and threonine residues, but also on tyrosine residues. Autophosphorylation at Thr-488 is required for kinase activation. The active autophosphorylated form apparently is largely refractory to cellular heme fluctuations. Post-translationally, ubiquitinated and degraded by the SIFI complex once the mitochondrial stress has been resolved, thereby providing stress response silencing. Within the SIFI complex, UBR4 initiates ubiquitin chain that are further elongated or branched by KCMF1.

The enzyme catalyses L-seryl-[protein] + ATP = O-phospho-L-seryl-[protein] + ADP + H(+). It catalyses the reaction L-threonyl-[protein] + ATP = O-phospho-L-threonyl-[protein] + ADP + H(+). Its activity is regulated as follows. In normal conditions, the protein kinase activity is inhibited; inhibition is relieved by various stress conditions. Inhibited by heme: in presence of heme, forms a disulfide-linked inactive homodimer. Heme depletion relieves inhibition and stimulates kinase activity by autophosphorylation. Inhibited by the heme metabolites biliverdin and bilirubin. Induced by oxidative stress generated by arsenite treatment. Binding of nitric oxide (NO) to the heme iron in the N-terminal heme-binding domain activates the kinase activity, while binding of carbon monoxide (CO) suppresses kinase activity. Protein kinase activity is also activated upon binding to DELE1 in response to various stress, triggering the integrated stress response (ISR): activated by full-length DELE1 in response to iron deficiency, while it is activated by the processed form of DELE1 (S-DELE1) in response to mitochondrial stress. Functionally, metabolic-stress sensing protein kinase that phosphorylates the alpha subunit of eukaryotic translation initiation factor 2 (EIF2S1/eIF-2-alpha) in response to various stress conditions. Key activator of the integrated stress response (ISR) required for adaptation to various stress, such as heme deficiency, oxidative stress, osmotic shock, mitochondrial dysfunction and heat shock. EIF2S1/eIF-2-alpha phosphorylation in response to stress converts EIF2S1/eIF-2-alpha in a global protein synthesis inhibitor, leading to a global attenuation of cap-dependent translation, while concomitantly initiating the preferential translation of ISR-specific mRNAs, such as the transcriptional activator ATF4, and hence allowing ATF4-mediated reprogramming. Acts as a key sensor of heme-deficiency: in normal conditions, binds hemin via a cysteine thiolate and histidine nitrogenous coordination, leading to inhibit the protein kinase activity. This binding occurs with moderate affinity, allowing it to sense the heme concentration within the cell: heme depletion relieves inhibition and stimulates kinase activity, activating the ISR. Thanks to this unique heme-sensing capacity, plays a crucial role to shut off protein synthesis during acute heme-deficient conditions. In red blood cells (RBCs), controls hemoglobin synthesis ensuring a coordinated regulation of the synthesis of its heme and globin moieties. It thereby plays an essential protective role for RBC survival in anemias of iron deficiency. Iron deficiency also triggers activation by full-length DELE1. Also activates the ISR in response to mitochondrial dysfunction: HRI/EIF2AK1 protein kinase activity is activated upon binding to the processed form of DELE1 (S-DELE1), thereby promoting the ATF4-mediated reprogramming. Also acts as an activator of mitophagy in response to mitochondrial damage: catalyzes phosphorylation of eIF-2-alpha (EIF2S1) following activation by S-DELE1, thereby promoting mitochondrial localization of EIF2S1, triggering PRKN-independent mitophagy. The chain is Eukaryotic translation initiation factor 2-alpha kinase 1 from Homo sapiens (Human).